The sequence spans 471 residues: RuvB-like protein 2 (471 aa).

Position 75–82 (75–82 (GPPSTGKT)) interacts with ATP.

The protein belongs to the RuvB family. Probably forms a homohexamer. Interacts with RVB1 and may form heterododecamers with RVB1. Component of the SWR1 chromatin remodeling complex composed of at least ACT1, ARP4, RVB1, RVB2, ARP6, YAF9, VPS71, VPS72, SWC3, SWC4, SWC5, SWC7 and SWR1, and perhaps BDF1. Component of the chromatin-remodeling INO80 complex, at least composed of ARP4, ARP5, ARP8, RVB1, RVB2, TAF14, NHP10, IES1, IES3, IES4, IES6, ACT1, IES2, IES5 and INO80. Also belongs to the R2TP complex composed of at least RVB1, RVB2, TAH1 and PIH1. Interacts with SPT15/TBP.

It localises to the nucleus. The protein resides in the nucleoplasm. It carries out the reaction ATP + H2O = ADP + phosphate + H(+). Functionally, DNA helicase which participates in several chromatin remodeling complexes, including the SWR1 and the INO80 complexes. The SWR1 complex mediates the ATP-dependent exchange of histone H2A for the H2A variant HZT1 leading to transcriptional regulation of selected genes by chromatin remodeling. The INO80 complex remodels chromatin by shifting nucleosomes. Its ability to induce transcription of some phosphate-responsive genes is modulated by inositol polyphosphates. The INO80 complex is involved in DNA repair by associating to 'Ser-129' phosphorylated H2A histones as a response to DNA damage. During transcription may recruit SPT15/TBP to the TATA-boxes of involved genes. Required for box C/D and box H/ACA snoRNA accumulation and involved in pre-rRNA processing. The protein is RuvB-like protein 2 (RVB2) of Saccharomyces cerevisiae (strain ATCC 204508 / S288c) (Baker's yeast).